The following is a 584-amino-acid chain: ATP-dependent lipid A-core flippase 2 (584 aa).

The next 6 membrane-spanning stretches (helical) occupy residues 32–52 (IFIA…MIYF), 68–88 (TLQL…IASF), 146–166 (SAVV…SMMV), 167–187 (YNSW…ALII), 254–274 (AISN…VLLL), and 280–300 (VLNQ…GSLL). Positions 33-315 (FIALAGLCLF…LSNINQQLQK (283 aa)) constitute an ABC transmembrane type-1 domain. In terms of domain architecture, ABC transporter spans 347-583 (IRFNNFSFTY…AGYYQSLYQS (237 aa)). 381–388 (GESGSGKS) lines the ATP pocket.

Belongs to the ABC transporter superfamily. Lipid exporter (TC 3.A.1.106) family. In terms of assembly, homodimer.

The protein resides in the cell inner membrane. It carries out the reaction ATP + H2O + lipid A-core oligosaccharideSide 1 = ADP + phosphate + lipid A-core oligosaccharideSide 2.. Involved in lipopolysaccharide (LPS) biosynthesis. Translocates lipid A-core from the inner to the outer leaflet of the inner membrane. Transmembrane domains (TMD) form a pore in the inner membrane and the ATP-binding domain (NBD) is responsible for energy generation. The protein is ATP-dependent lipid A-core flippase 2 of Colwellia psychrerythraea (strain 34H / ATCC BAA-681) (Vibrio psychroerythus).